The chain runs to 258 residues: tRNA (guanine-N(7)-)-methyltransferase (258 aa).

The segment at 1–42 (MPETPLMRDNGPVNHADQDAPAVPEEGQTKDSKGSRLHPRVT) is disordered. S-adenosyl-L-methionine is bound by residues E90, E115, D142, and D165. The active site involves D165. Substrate contacts are provided by residues K169, D201, and 235–238 (TKFE).

The protein belongs to the class I-like SAM-binding methyltransferase superfamily. TrmB family.

The enzyme catalyses guanosine(46) in tRNA + S-adenosyl-L-methionine = N(7)-methylguanosine(46) in tRNA + S-adenosyl-L-homocysteine. It functions in the pathway tRNA modification; N(7)-methylguanine-tRNA biosynthesis. Its function is as follows. Catalyzes the formation of N(7)-methylguanine at position 46 (m7G46) in tRNA. This Rhodococcus jostii (strain RHA1) protein is tRNA (guanine-N(7)-)-methyltransferase.